Here is a 671-residue protein sequence, read N- to C-terminus: DNA ligase (671 aa).

NAD(+)-binding positions include 32-36 (DAEYD), 81-82 (SL), and E113. Catalysis depends on K115, which acts as the N6-AMP-lysine intermediate. Residues R136, E173, K290, and K314 each coordinate NAD(+). Residues C408, C411, C426, and C432 each contribute to the Zn(2+) site. The 79-residue stretch at 593-671 (EIDSPFAGKT…ETEMLRLLGS (79 aa)) folds into the BRCT domain.

The protein belongs to the NAD-dependent DNA ligase family. LigA subfamily. It depends on Mg(2+) as a cofactor. Mn(2+) serves as cofactor.

The catalysed reaction is NAD(+) + (deoxyribonucleotide)n-3'-hydroxyl + 5'-phospho-(deoxyribonucleotide)m = (deoxyribonucleotide)n+m + AMP + beta-nicotinamide D-nucleotide.. In terms of biological role, DNA ligase that catalyzes the formation of phosphodiester linkages between 5'-phosphoryl and 3'-hydroxyl groups in double-stranded DNA using NAD as a coenzyme and as the energy source for the reaction. It is essential for DNA replication and repair of damaged DNA. This Escherichia fergusonii (strain ATCC 35469 / DSM 13698 / CCUG 18766 / IAM 14443 / JCM 21226 / LMG 7866 / NBRC 102419 / NCTC 12128 / CDC 0568-73) protein is DNA ligase.